Here is an 85-residue protein sequence, read N- to C-terminus: Small ribosomal subunit protein uS17 (85 aa).

Belongs to the universal ribosomal protein uS17 family. Part of the 30S ribosomal subunit.

One of the primary rRNA binding proteins, it binds specifically to the 5'-end of 16S ribosomal RNA. This chain is Small ribosomal subunit protein uS17, found in Blochmanniella floridana.